The primary structure comprises 281 residues: MRVLKTIAEVRQHLTEERRLGLSIGFVPTMGALHHGHLALVQKAREMCDRVLVSIFVNPKQFGSHEDFEVYPRDLLSDCTLLNKEAVEYVFAPSVEEMWPLGNDTIVEVEGLSRILMGELRPGHFCGVTSVVAKLFNIVQPDKVFFGEKDFQQLLIIRRMVKDLAFPIEVIGVPILRDSDGVASSSRNQLLTPEDRKAAKIIPESGKAAEKLYRQGERSVDKLCKAVRDILQQELRAIVESVDLRNMETLSAIKGTLDAPAVLLLTVRFGDVRLIDQYILQ.

30-37 provides a ligand contact to ATP; the sequence is MGALHHGH. The active-site Proton donor is His-37. Gln-61 is a binding site for (R)-pantoate. Residue Gln-61 participates in beta-alanine binding. 147-150 serves as a coordination point for ATP; sequence GEKD. A (R)-pantoate-binding site is contributed by Gln-153. ATP-binding positions include Leu-176 and 184-187; that span reads SSSR.

Belongs to the pantothenate synthetase family. As to quaternary structure, homodimer.

Its subcellular location is the cytoplasm. It carries out the reaction (R)-pantoate + beta-alanine + ATP = (R)-pantothenate + AMP + diphosphate + H(+). Its pathway is cofactor biosynthesis; (R)-pantothenate biosynthesis; (R)-pantothenate from (R)-pantoate and beta-alanine: step 1/1. Functionally, catalyzes the condensation of pantoate with beta-alanine in an ATP-dependent reaction via a pantoyl-adenylate intermediate. The protein is Pantothenate synthetase of Bartonella bacilliformis (strain ATCC 35685 / KC583 / Herrer 020/F12,63).